The primary structure comprises 1064 residues: Protein NLRC3 (1064 aa).

The region spanning 138–459 (RVSLTIGVAG…YCFIHLSLQE (322 aa)) is the NACHT domain. An ATP-binding site is contributed by 144 to 151 (GVAGVGKT). LRR repeat units lie at residues 338 to 362 (LGHL…LCEL), 570 to 593 (LSEL…TLAG), 632 to 662 (LPQL…VLSG), 664 to 687 (DCRI…ALAR), 692 to 715 (NRSL…ALAD), 720 to 743 (NRTL…CVAE), 748 to 771 (NQTI…QMAD), 776 to 799 (NRSL…ALAE), 804 to 827 (NQIL…VLMR), 832 to 855 (NQTL…ALTQ), 860 to 883 (NNTL…AIAV), 888 to 911 (NHSL…ALGQ), 916 to 939 (NRTL…SVAG), 972 to 995 (NRTL…ALAN), 1000 to 1022 (NSSL…IFVA), and 1028 to 1051 (NHGL…MISE).

The protein belongs to the NLRP family. In terms of assembly, directly interacts (via CARD) with TMEM173/STING; this interaction reduces TMEM173 trafficking to the perinuclear region in response to interferon stimulatory DNA. Also interacts, but to a lesser extent, with TBK1. Interacts with TRAF6; this interaction results in decreased TRAF6 'Lys-63'-linked polyubiquitination, but leaves 'Lys-48'-linked chains unchanged, promoting TRAF6 protein degradation. Interacts with PIK3R1/PIK3R2; this interaction disrupts the association between PIK3R1/PIK3R2 and the p110 catalytic subunit PIK3CA/PIK3CB/PIK3CD and reduces PIK3R1/PIK3R2 activation. Weakly interacts with PYCARD/ASC. Interacts with CASP1 and CASP5. Expressed in bone marrow-derived macrophages.

The protein resides in the cytoplasm. Negative regulator of the innate immune response. Attenuates signaling pathways activated by Toll-like receptors (TLRs) and the DNA sensor STING/TMEM173 in response to pathogen-associated molecular patterns, such as intracellular poly(dA:dT), but not poly(I:C), or in response to DNA virus infection, including that of Herpes simplex virus 1 (HSV1). May affect TLR4 signaling by acting at the level of TRAF6 ubiquitination, decreasing the activating 'Lys-63'-linked ubiquitination and leaving unchanged the degradative 'Lys-48'-linked ubiquitination. Inhibits the PI3K-AKT-mTOR pathway possibly by directly interacting with the posphatidylinositol 3-kinase regulatory subunit p85 (PIK3R1/PIK3R2) and disrupting the association between PIK3R1/PIK3R2 and the catalytic subunit p110 (PIK3CA/PIK3CB/PIK3CD) and reducing PIK3R1/PIK3R2 activation. Via its regulation of the PI3K-AKT-mTOR pathway, controls cell proliferation, predominantly in intestinal epithelial cells. May also affect NOD1- or NOD2-mediated NF-kappa-B activation. Might also affect the inflammatory response by preventing NLRP3 inflammasome formation, CASP1 cleavage and IL1B maturation. The chain is Protein NLRC3 (Nlrc3) from Mus musculus (Mouse).